The chain runs to 300 residues: Protoheme IX farnesyltransferase 1 (300 aa).

A run of 8 helical transmembrane segments spans residues 28 to 48 (VVAL…PGAV), 50 to 70 (VQPL…AAAY), 106 to 126 (AMAI…TAWL), 150 to 170 (IVVG…AITG), 176 to 196 (ALLL…ALAI), 222 to 242 (CIML…LVGM), 243 to 263 (CGPL…YKAW), and 280 to 300 (FSIY…YLWS).

Belongs to the UbiA prenyltransferase family. Protoheme IX farnesyltransferase subfamily.

Its subcellular location is the cell inner membrane. The catalysed reaction is heme b + (2E,6E)-farnesyl diphosphate + H2O = Fe(II)-heme o + diphosphate. It functions in the pathway porphyrin-containing compound metabolism; heme O biosynthesis; heme O from protoheme: step 1/1. Functionally, converts heme B (protoheme IX) to heme O by substitution of the vinyl group on carbon 2 of heme B porphyrin ring with a hydroxyethyl farnesyl side group. The chain is Protoheme IX farnesyltransferase 1 from Shewanella loihica (strain ATCC BAA-1088 / PV-4).